Consider the following 188-residue polypeptide: uncharacterized protein (188 aa).

The segment at 133-153 is disordered; that stretch reads PKGRPTMKLQYPKMPPKPKTR.

Belongs to the IS150/IS1296 orfA family.

This is an uncharacterized protein from Haemophilus influenzae (strain ATCC 51907 / DSM 11121 / KW20 / Rd).